We begin with the raw amino-acid sequence, 319 residues long: MNLVRTAMLLAFMTALFMAVGYVIGGRGGMMIALLMAAGMNFFSYWNSDRMVLRMYRAQEVDERDAPEYYGIVRDLATNAGLPMPRVYVIDSPQPNAFATGRNPQNAAVAASTGLLQSLSYEEVAGVMAHELAHIQYRDTLTMTLTATLAGAISMLGNFAFFFGGNRDNNNPLGFVGVLIAMIVAPFAAMLVQMAISRTREYSADRRGAEICGNPLSLASALRKIAGAAHAIPNYDAERNPATAHMFIINPLSGERMDNLFSTHPNTENRVAALERMAREMSAGSTAPARPDNAVRRSRSVPKTGWGRGGSEPPKGPWS.

Helical transmembrane passes span 6-26 (TAML…VIGG) and 28-48 (GGMM…YWNS). Histidine 130 is a Zn(2+) binding site. The active site involves glutamate 131. Zn(2+) is bound at residue histidine 134. 2 consecutive transmembrane segments (helical) span residues 145–165 (LTAT…FFGG) and 172–192 (PLGF…AMLV). Glutamate 201 serves as a coordination point for Zn(2+). Residues 279 to 319 (REMSAGSTAPARPDNAVRRSRSVPKTGWGRGGSEPPKGPWS) form a disordered region.

This sequence belongs to the peptidase M48B family. It depends on Zn(2+) as a cofactor.

It localises to the cell inner membrane. This Sinorhizobium fredii (strain NBRC 101917 / NGR234) protein is Protease HtpX homolog.